A 433-amino-acid polypeptide reads, in one-letter code: ATP-dependent RNA helicase SUB2 (433 aa).

The Q motif signature appears at 49–77; the sequence is TGFRDFLLKPELLRAIGDCGFEHPSEVQQ. A Helicase ATP-binding domain is found at 80-255; that stretch reads IPQSILGTDV…KKFMQNPLEI (176 aa). 93–100 lines the ATP pocket; sequence AKSGLGKT. Residues 202-205 carry the DEAD box motif; sequence DECD. The region spanning 267–428 is the Helicase C-terminal domain; that stretch reads GLQQYYIKLE…EFPEEGVDPS (162 aa).

Belongs to the DEAD box helicase family. DECD subfamily.

It is found in the nucleus. It catalyses the reaction ATP + H2O = ADP + phosphate + H(+). Functionally, ATP-binding RNA helicase involved in transcription elongation and required for the export of mRNA out of the nucleus. SUB2 also plays a role in pre-mRNA splicing and spliceosome assembly. May be involved in rDNA and telomeric silencing, and maintenance of genome integrity. The chain is ATP-dependent RNA helicase SUB2 (SUB2) from Scheffersomyces stipitis (strain ATCC 58785 / CBS 6054 / NBRC 10063 / NRRL Y-11545) (Yeast).